We begin with the raw amino-acid sequence, 645 residues long: Alkyldihydroxyacetonephosphate synthase, peroxisomal (645 aa).

A compositionally biased stretch (low complexity) spans 1–10; the sequence is MAEAAAGEAG. A peroxisome-targeting transit peptide spans 1 to 45; that stretch reads MAEAAAGEAGASERDPDAGRARRRLRVLSGHLLGRPQEAPSTNEC. Positions 1 to 72 are disordered; that stretch reads MAEAAAGEAG…AAPESGTIPK (72 aa). Basic and acidic residues predominate over residues 11-20; the sequence is ASERDPDAGR. Over residues 50-69 the composition is skewed to low complexity; that stretch reads AASAAGASPAATPAAPESGT. 2 positions are modified to phosphoserine: serine 52 and serine 57. Threonine 61 bears the Phosphothreonine mark. Position 89 is an N6-acetyllysine (lysine 89). Residues 189–371 enclose the FAD-binding PCMH-type domain; that stretch reads FERIPDIVVW…TEATIKIRPT (183 aa). FAD is bound by residues 221–227, 290–296, and 303–306; these read PIGGGTS, DSLEFST, and TRAS. Residue lysine 334 is modified to N6-acetyllysine. An FAD-binding site is contributed by 355 to 361; that stretch reads EGTLGVI. Position 502 (arginine 502) interacts with substrate. The active-site Proton donor/acceptor is the tyrosine 565. Important for enzyme activity regions lie at residues 602 to 604 and 641 to 645; these read HHH and NRNLL.

Belongs to the FAD-binding oxidoreductase/transferase type 4 family. In terms of assembly, homodimer. FAD serves as cofactor.

It is found in the peroxisome membrane. It localises to the peroxisome. It carries out the reaction a long chain fatty alcohol + a 1-acylglycerone 3-phosphate = a 1-O-alkylglycerone 3-phosphate + a long-chain fatty acid + H(+). The enzyme catalyses hexadecan-1-ol + 1-hexadecanoylglycerone 3-phosphate = 1-O-hexadecylglycerone 3-phosphate + hexadecanoate + H(+). It catalyses the reaction 1-hexadecanoylglycerone 3-phosphate + a long-chain fatty acid = a 1-acylglycerone 3-phosphate + hexadecanoate. Its pathway is glycerolipid metabolism; ether lipid biosynthesis. In terms of biological role, catalyzes the exchange of the acyl chain in acyl-dihydroxyacetonephosphate (acyl-DHAP) for a long chain fatty alcohol, yielding the first ether linked intermediate, i.e. alkyl-dihydroxyacetonephosphate (alkyl-DHAP), in the pathway of ether lipid biosynthesis. This chain is Alkyldihydroxyacetonephosphate synthase, peroxisomal (Agps), found in Mus musculus (Mouse).